The following is a 253-amino-acid chain: Shikimate dehydrogenase (NADP(+)) (253 aa).

Shikimate-binding positions include serine 13–serine 15 and threonine 59. The Proton acceptor role is filled by lysine 63. Glutamate 74 is a binding site for NADP(+). Shikimate is bound by residues asparagine 83 and aspartate 94. Residues glycine 115–alanine 119, asparagine 139–arginine 144, and valine 199 each bind NADP(+). Tyrosine 201 contributes to the shikimate binding site. Residue glycine 221 coordinates NADP(+).

The protein belongs to the shikimate dehydrogenase family. In terms of assembly, homodimer.

The enzyme catalyses shikimate + NADP(+) = 3-dehydroshikimate + NADPH + H(+). Its pathway is metabolic intermediate biosynthesis; chorismate biosynthesis; chorismate from D-erythrose 4-phosphate and phosphoenolpyruvate: step 4/7. Its function is as follows. Involved in the biosynthesis of the chorismate, which leads to the biosynthesis of aromatic amino acids. Catalyzes the reversible NADPH linked reduction of 3-dehydroshikimate (DHSA) to yield shikimate (SA). In Thermotoga maritima (strain ATCC 43589 / DSM 3109 / JCM 10099 / NBRC 100826 / MSB8), this protein is Shikimate dehydrogenase (NADP(+)).